The chain runs to 467 residues: DNA repair protein RadA (467 aa).

The C4-type zinc-finger motif lies at 10-27 (CQNCGAVHSRWAGKCDSC). 98-105 (GDPGIGKS) serves as a coordination point for ATP. The short motif at 260 to 264 (KNRFG) is the RadA KNRFG motif element. The lon-protease-like stretch occupies residues 359 to 467 (DVYLNVAGGY…RIAASGAGKK (109 aa)).

It belongs to the RecA family. RadA subfamily.

Its function is as follows. DNA-dependent ATPase involved in processing of recombination intermediates, plays a role in repairing DNA breaks. Stimulates the branch migration of RecA-mediated strand transfer reactions, allowing the 3' invading strand to extend heteroduplex DNA faster. Binds ssDNA in the presence of ADP but not other nucleotides, has ATPase activity that is stimulated by ssDNA and various branched DNA structures, but inhibited by SSB. Does not have RecA's homology-searching function. The sequence is that of DNA repair protein RadA from Brucella abortus (strain 2308).